Consider the following 197-residue polypeptide: GTP cyclohydrolase-2 (197 aa).

A GTP-binding site is contributed by 50 to 54 (RIHSE). The Zn(2+) site is built by C55, C66, and C68. GTP-binding positions include Q71, 93–95 (EGR), and T115. The Proton acceptor role is filled by D127. Catalysis depends on R129, which acts as the Nucleophile. Residues T150 and K155 each contribute to the GTP site.

The protein belongs to the GTP cyclohydrolase II family. Zn(2+) serves as cofactor.

The catalysed reaction is GTP + 4 H2O = 2,5-diamino-6-hydroxy-4-(5-phosphoribosylamino)-pyrimidine + formate + 2 phosphate + 3 H(+). Its pathway is cofactor biosynthesis; riboflavin biosynthesis; 5-amino-6-(D-ribitylamino)uracil from GTP: step 1/4. Its function is as follows. Catalyzes the conversion of GTP to 2,5-diamino-6-ribosylamino-4(3H)-pyrimidinone 5'-phosphate (DARP), formate and pyrophosphate. The chain is GTP cyclohydrolase-2 from Tolumonas auensis (strain DSM 9187 / NBRC 110442 / TA 4).